A 598-amino-acid chain; its full sequence is Pentatricopeptide repeat-containing protein At1g09900 (598 aa).

PPR repeat units lie at residues 101-135, 136-170, 171-201, 203-237, 238-272, 273-307, 308-342, 343-377, 378-412, 413-447, 448-482, 483-517, 518-552, and 553-587; these read EDVESNNHLRQMVRTGELEEGFKFLENMVYHGNVP, DIIPCTTLIRGFCRLGKTRKAAKILEILEGSGAVP, DVITYNVMISGYCKAGEINNALSVLDRMSVS, DVVTYNTILRSLCDSGKLKQAMEVLDRMLQRDCYP, DVITYTILIEATCRDSGVGHAMKLLDEMRDRGCTP, DVVTYNVLVNGICKEGRLDEAIKFLNDMPSSGCQP, NVITHNIILRSMCSTGRWMDAEKLLADMLRKGFSP, SVVTFNILINFLCRKGLLGRAIDILEKMPQHGCQP, NSLSYNPLLHGFCKEKKMDRAIEYLERMVSRGCYP, DIVTYNTMLTALCKDGKVEDAVEILNQLSSKGCSP, VLITYNTVIDGLAKAGKTGKAIKLLDEMRAKDLKP, DTITYSSLVGGLSREGKVDEAIKFFHEFERMGIRP, NAVTFNSIMLGLCKSRQTDRAIDFLVFMINRGCKP, and NETSYTILIEGLAYEGMAKEALELLNELCNKGLMK.

It belongs to the PPR family. P subfamily.

This is Pentatricopeptide repeat-containing protein At1g09900 from Arabidopsis thaliana (Mouse-ear cress).